Consider the following 373-residue polypeptide: Probable G-protein coupled receptor 173 (373 aa).

Residues methionine 1–leucine 26 are Extracellular-facing. N-linked (GlcNAc...) asparagine glycosylation is present at asparagine 3. Residues valine 27 to valine 47 traverse the membrane as a helical segment. Topologically, residues leucine 48–tyrosine 59 are cytoplasmic. A helical transmembrane segment spans residues phenylalanine 60–leucine 80. Residues alanine 81–lysine 97 are Extracellular-facing. Cysteine 96 and cysteine 174 are oxidised to a cystine. A helical transmembrane segment spans residues isoleucine 98–serine 118. Residues valine 119–threonine 139 lie on the Cytoplasmic side of the membrane. The helical transmembrane segment at cysteine 140–phenylalanine 160 threads the bilayer. Residues aspartate 161–glycine 188 lie on the Extracellular side of the membrane. N-linked (GlcNAc...) asparagine glycosylation is present at asparagine 184. A helical membrane pass occupies residues phenylalanine 189–leucine 209. At phenylalanine 210 to methionine 287 the chain is on the cytoplasmic side. The chain crosses the membrane as a helical span at residues phenylalanine 288–tryptophan 308. Residues arginine 309–leucine 322 lie on the Extracellular side of the membrane. Residues alanine 323 to leucine 343 traverse the membrane as a helical segment. Residues asparagine 344–methionine 373 lie on the Cytoplasmic side of the membrane.

This sequence belongs to the G-protein coupled receptor 1 family. In terms of tissue distribution, expressed in the ovary, specifically in granulosa cells of follicles that have passed the primary stage and in oocytes (at protein level). Expressed at high levels in brain. Lower levels in small intestine. In brain regions, detected in all regions tested. Highest levels in the cerebellum and cerebral cortex.

It localises to the cell membrane. Is a receptor for the SMIM20 derived peptides Phoenixin-14 and Phoenixin-20. It mediates the Phoenixin-14 and Phoenixin-20 augmentation of gonadotropin-releasing hormone (GNRH) signaling in the hypothalamus and pituitary gland. In the ovary, it mediates the effects of Phoenixin-14 and Phoenixin-20 induced granulosa cell proliferation during follicular growth. This is Probable G-protein coupled receptor 173 (GPR173) from Homo sapiens (Human).